Here is a 156-residue protein sequence, read N- to C-terminus: Small ribosomal subunit protein uS7 (156 aa).

This sequence belongs to the universal ribosomal protein uS7 family. Part of the 30S ribosomal subunit. Contacts proteins S9 and S11.

Its function is as follows. One of the primary rRNA binding proteins, it binds directly to 16S rRNA where it nucleates assembly of the head domain of the 30S subunit. Is located at the subunit interface close to the decoding center, probably blocks exit of the E-site tRNA. This is Small ribosomal subunit protein uS7 from Levilactobacillus brevis (strain ATCC 367 / BCRC 12310 / CIP 105137 / JCM 1170 / LMG 11437 / NCIMB 947 / NCTC 947) (Lactobacillus brevis).